Reading from the N-terminus, the 403-residue chain is Probable tRNA sulfurtransferase (403 aa).

The THUMP domain occupies 60–165; sequence KLAEERLKPI…KEGVFLSCRT (106 aa). Residues 183–184, 208–209, Arg-265, Gly-287, and Gln-296 each bind ATP; these read ML and HF.

This sequence belongs to the ThiI family.

The protein resides in the cytoplasm. It catalyses the reaction [ThiI sulfur-carrier protein]-S-sulfanyl-L-cysteine + a uridine in tRNA + 2 reduced [2Fe-2S]-[ferredoxin] + ATP + H(+) = [ThiI sulfur-carrier protein]-L-cysteine + a 4-thiouridine in tRNA + 2 oxidized [2Fe-2S]-[ferredoxin] + AMP + diphosphate. The enzyme catalyses [ThiS sulfur-carrier protein]-C-terminal Gly-Gly-AMP + S-sulfanyl-L-cysteinyl-[cysteine desulfurase] + AH2 = [ThiS sulfur-carrier protein]-C-terminal-Gly-aminoethanethioate + L-cysteinyl-[cysteine desulfurase] + A + AMP + 2 H(+). The protein operates within cofactor biosynthesis; thiamine diphosphate biosynthesis. Its function is as follows. Catalyzes the ATP-dependent transfer of a sulfur to tRNA to produce 4-thiouridine in position 8 of tRNAs, which functions as a near-UV photosensor. Also catalyzes the transfer of sulfur to the sulfur carrier protein ThiS, forming ThiS-thiocarboxylate. This is a step in the synthesis of thiazole, in the thiamine biosynthesis pathway. The sulfur is donated as persulfide by IscS. This chain is Probable tRNA sulfurtransferase, found in Listeria welshimeri serovar 6b (strain ATCC 35897 / DSM 20650 / CCUG 15529 / CIP 8149 / NCTC 11857 / SLCC 5334 / V8).